The sequence spans 295 residues: Release factor glutamine methyltransferase (295 aa).

Residues 127–131 (GTGSG), D150, F179, and N195 contribute to the S-adenosyl-L-methionine site. 195–198 (NPPY) contacts substrate.

The protein belongs to the protein N5-glutamine methyltransferase family. PrmC subfamily.

It carries out the reaction L-glutaminyl-[peptide chain release factor] + S-adenosyl-L-methionine = N(5)-methyl-L-glutaminyl-[peptide chain release factor] + S-adenosyl-L-homocysteine + H(+). Methylates the class 1 translation termination release factors RF1/PrfA and RF2/PrfB on the glutamine residue of the universally conserved GGQ motif. This is Release factor glutamine methyltransferase from Nitratidesulfovibrio vulgaris (strain ATCC 29579 / DSM 644 / CCUG 34227 / NCIMB 8303 / VKM B-1760 / Hildenborough) (Desulfovibrio vulgaris).